The sequence spans 648 residues: Biosynthetic arginine decarboxylase (648 aa).

Position 109 is an N6-(pyridoxal phosphate)lysine (K109). 291–301 (LDVGGGLGVDY) contacts substrate.

This sequence belongs to the Orn/Lys/Arg decarboxylase class-II family. SpeA subfamily. Requires Mg(2+) as cofactor. The cofactor is pyridoxal 5'-phosphate.

The catalysed reaction is L-arginine + H(+) = agmatine + CO2. Its function is as follows. Catalyzes the biosynthesis of agmatine from arginine. This chain is Biosynthetic arginine decarboxylase, found in Prochlorococcus marinus (strain SARG / CCMP1375 / SS120).